Here is a 72-residue protein sequence, read N- to C-terminus: Large ribosomal subunit protein bL28 (72 aa).

Belongs to the bacterial ribosomal protein bL28 family.

In Chlorobaculum tepidum (strain ATCC 49652 / DSM 12025 / NBRC 103806 / TLS) (Chlorobium tepidum), this protein is Large ribosomal subunit protein bL28.